We begin with the raw amino-acid sequence, 143 residues long: Interleukin-3 (143 aa).

The signal sequence occupies residues Met-1–Gly-23. An N-linked (GlcNAc...) asparagine glycan is attached at Asn-79.

Belongs to the IL-3 family. In terms of assembly, monomer.

The protein localises to the secreted. Its function is as follows. Granulocyte/macrophage colony-stimulating factors are cytokines that act in hematopoiesis by controlling the production, differentiation, and function of 2 related white cell populations of the blood, the granulocytes and the monocytes-macrophages. Functionally, this CSF induces granulocytes, macrophages, mast cells, stem cells, erythroid cells, eosinophils and megakaryocytes. This is Interleukin-3 (IL3) from Canis lupus familiaris (Dog).